Consider the following 235-residue polypeptide: Urease accessory protein UreF (235 aa).

It belongs to the UreF family. UreD, UreF and UreG form a complex that acts as a GTP-hydrolysis-dependent molecular chaperone, activating the urease apoprotein by helping to assemble the nickel containing metallocenter of UreC. The UreE protein probably delivers the nickel.

The protein localises to the cytoplasm. Its function is as follows. Required for maturation of urease via the functional incorporation of the urease nickel metallocenter. The chain is Urease accessory protein UreF from Haemophilus influenzae (strain ATCC 51907 / DSM 11121 / KW20 / Rd).